Consider the following 139-residue polypeptide: Ribosome-binding factor A (139 aa).

It belongs to the RbfA family. Monomer. Binds 30S ribosomal subunits, but not 50S ribosomal subunits or 70S ribosomes.

It is found in the cytoplasm. In terms of biological role, one of several proteins that assist in the late maturation steps of the functional core of the 30S ribosomal subunit. Associates with free 30S ribosomal subunits (but not with 30S subunits that are part of 70S ribosomes or polysomes). Required for efficient processing of 16S rRNA. May interact with the 5'-terminal helix region of 16S rRNA. This chain is Ribosome-binding factor A, found in Methylobacterium sp. (strain 4-46).